We begin with the raw amino-acid sequence, 215 residues long: MKYELTATEARVIGCLLEKQVTTPEQYPLSVHGVVTACNQKTNREPVMNLTEQAVQEQLDNLVKRHFLRTVSGFGNRVTKYEQRFCNSEFGDLKLSAAEVALVTTLLLRGAQTPGELRSRASRMYEFSDMAEVESTLERLASREDGPYVIRLAREPGKRESRYMHLFCGDVDELSLQTSVPDSASGDLQSRVEALESEVAELKQRLDSLLAHLGE.

It belongs to the UPF0502 family.

The sequence is that of UPF0502 protein YceH from Salmonella arizonae (strain ATCC BAA-731 / CDC346-86 / RSK2980).